Reading from the N-terminus, the 724-residue chain is MSKNATNTGGKCPVMHGGATEVSISNMEWWPKALNLDILHQHDSKTNPMGPDFNYREMVKKLDVAALKKDMHALMTESQDWWLADWGHYGGLMIRLSWHAAGTYRIADGRGGAGTGNQRFAPINSWPDNVNLDKARRLLWPIKKKYGNKLSWADLIAYAGTIAYESMGLKTFGFAFGREDIWHPEKDTYWGSEKEWLAPSGSEGSRYSGERDLENPLAAVMMGLIYVNPEGVDGNPDPLKTAHDIRVTFERMAMNDEETVALTAGGHTVGKCHGNGDADQLGAEPEGAEIEDQGFGWLNKTKRGIGRDTVSSGIEGAWTTNPTQWDNGYFQLLLNYEWELKKSPAGAWQWEPINIKEEHRPVDVEDASIRLTPIMTDADMAMKMDPEYRKISDRFHQDQDYFSEVFARAWFKLTHRDMGPKVRYIGPDVPQEEQIWQDPVPAGSTDYDIQAVKDKIAASDLSVSEMVSTAWDSARTFRGSDKRGGANGARIRLAPQKDWKGNEPARLSKVLAVLEGIAAGSKASVADVIVLAGNVGIEQAAKAAGFDLTVPFSSGRGDATDEMTDLDSFDVLEPIHDGYRNWLKQDYAVSAEELMLDRTQLMGLTAHEMTVLIGGMRVIGTNQGGTKHGVLTEHEGTLSNDFFVNLTDMNYTWKPTGNNLYEIRDRKTDKVKWTATRVDLVFGSNSILRAYAEVYAQDDNKEKFVQDFVSAWTKVMNADRFDLI.

A cross-link (tryptophyl-tyrosyl-methioninium (Trp-Tyr) (with M-252)) is located at residues 98 to 226 (WHAAGTYRIA…LAAVMMGLIY (129 aa)). His-99 acts as the Proton acceptor in catalysis. The segment at residues 226–252 (YVNPEGVDGNPDPLKTAHDIRVTFERM) is a cross-link (tryptophyl-tyrosyl-methioninium (Tyr-Met) (with W-98)). Heme b is bound at residue His-267.

The protein belongs to the peroxidase family. Peroxidase/catalase subfamily. As to quaternary structure, homodimer or homotetramer. Heme b is required as a cofactor. Formation of the three residue Trp-Tyr-Met cross-link is important for the catalase, but not the peroxidase activity of the enzyme.

The catalysed reaction is H2O2 + AH2 = A + 2 H2O. The enzyme catalyses 2 H2O2 = O2 + 2 H2O. In terms of biological role, bifunctional enzyme with both catalase and broad-spectrum peroxidase activity. The polypeptide is Catalase-peroxidase (Psychromonas ingrahamii (strain DSM 17664 / CCUG 51855 / 37)).